Consider the following 370-residue polypeptide: Propane 2-monooxygenase, reductase component (370 aa).

Positions 1-14 are enriched in basic residues; that stretch reads MAPRPLRRHPPLHH. The interval 1–21 is disordered; sequence MAPRPLRRHPPLHHSFHESRR. Positions 28–118 constitute a 2Fe-2S ferredoxin-type domain; that stretch reads HRINFEPVDI…DCTIELLNFD (91 aa). [2Fe-2S] cluster-binding residues include C62, C67, C70, and C102. Residues 128–229 enclose the FAD-binding FR-type domain; sequence IQDVRTRVTR…TGPYGSFTIK (102 aa).

Belongs to the TmoA/XamoA family. As to quaternary structure, the propane 2-monooxygenase multicomponent enzyme system is composed of an electron transfer component and a monooxygenase component interacting with the effector protein PrmD. The electron transfer component is composed of a reductase (PrmB), and the monooxygenase component is formed by a large subunit (PrmA) and a small subunit (PrmC). It depends on FAD as a cofactor. Requires [2Fe-2S] cluster as cofactor.

Reductase component of the propane 2-monooxygenase multicomponent enzyme system which is involved in the degradation of propane via the O2-dependent hydroxylation of propane. Reductase catalyzes the transfer of electrons from NADH or NADPH to monooxygenase. The protein is Propane 2-monooxygenase, reductase component of Rhodococcus jostii (strain RHA1).